The sequence spans 383 residues: MASLDSLVSFFLSTLFVTIVSSQTQCRNLESIISFGDSITDTGNLVGLSDRNHLPVTAFLPYGETFFHHPTGRSCNGRIIIDFIAEFLGLPHVPPFYGSKNGNFEKGVNFAVAGATALETSILEKRGIYYPHSNISLGIQLKTFKESLPNLCGSPTDCRDMIGNAFIIMGEIGGNDFNFAFFVNKTSEVKELVPLVITKISSAIVELVDMGGRTFLVPGNFPLGCSATYLTLYQTSNKEEYDPLTGCLTWLNDFSEYYNEKLQAELNRLSKLYPHVNIIYGDYFNALLRLYQEPSKFGFMDRPLPACCGLGGPYNFTLSKKCGSVGVKYCSDPSKYVNWDGVHMTEAAYKWIADGLLKGPYTIPSFHWLCLGSKIKSKESLDT.

The first 22 residues, 1–22 (MASLDSLVSFFLSTLFVTIVSS), serve as a signal peptide directing secretion. The Nucleophile role is filled by Ser-38. Asn-134, Asn-184, and Asn-315 each carry an N-linked (GlcNAc...) asparagine glycan. Catalysis depends on residues Asp-340 and His-343.

This sequence belongs to the 'GDSL' lipolytic enzyme family.

It localises to the secreted. The protein is GDSL esterase/lipase At1g28610 of Arabidopsis thaliana (Mouse-ear cress).